Here is a 611-residue protein sequence, read N- to C-terminus: Putative clathrin assembly protein At4g02650 (611 aa).

An ENTH domain is found at Gly-26–Lys-162. 2 disordered regions span residues Gly-158–Thr-184 and Thr-337–Leu-406. Basic and acidic residues predominate over residues Met-386–Gln-401.

The protein resides in the membrane. It localises to the clathrin-coated pit. The protein localises to the golgi apparatus. Its subcellular location is the cytoplasmic vesicle. It is found in the clathrin-coated vesicle. This chain is Putative clathrin assembly protein At4g02650, found in Arabidopsis thaliana (Mouse-ear cress).